A 263-amino-acid chain; its full sequence is 5'-nucleotidase SurE (263 aa).

Asp-8, Asp-9, Ser-40, and Asn-98 together coordinate a divalent metal cation.

This sequence belongs to the SurE nucleotidase family. The cofactor is a divalent metal cation.

The protein localises to the cytoplasm. It catalyses the reaction a ribonucleoside 5'-phosphate + H2O = a ribonucleoside + phosphate. In terms of biological role, nucleotidase that shows phosphatase activity on nucleoside 5'-monophosphates. The chain is 5'-nucleotidase SurE from Gloeobacter violaceus (strain ATCC 29082 / PCC 7421).